Consider the following 582-residue polypeptide: Membrane protein insertase YidC (582 aa).

A run of 4 helical transmembrane segments spans residues 4–24 (NTVL…YIQQ), 376–396 (IIPN…IIFF), 446–466 (ASGC…FGLF), and 542–562 (FMPL…LLFW).

It belongs to the OXA1/ALB3/YidC family. Type 1 subfamily. As to quaternary structure, interacts with the Sec translocase complex via SecD. Specifically interacts with transmembrane segments of nascent integral membrane proteins during membrane integration.

Its subcellular location is the cell inner membrane. Required for the insertion and/or proper folding and/or complex formation of integral membrane proteins into the membrane. Involved in integration of membrane proteins that insert both dependently and independently of the Sec translocase complex, as well as at least some lipoproteins. Aids folding of multispanning membrane proteins. This Treponema denticola (strain ATCC 35405 / DSM 14222 / CIP 103919 / JCM 8153 / KCTC 15104) protein is Membrane protein insertase YidC.